The chain runs to 269 residues: uncharacterized protein (269 aa).

This is an uncharacterized protein from Acanthamoeba polyphaga mimivirus (APMV).